Reading from the N-terminus, the 426-residue chain is MASSRIVELATRISENTAIVDAYLRENQLPSPSFDEDGPVDFAIQGEEVKKAHEEAIALSWELHRLLLGPSHFLRPVPNGLSLQAISKHDIATKVPVHGKISYAALAQQCGLSEINTRRFVRYAIVHHRVFCEPQPGYVAHSAASRLLAEDPVMRDVLSHYLEECFPSFAMTLRAIDQFQDNGEPNQTGWNLYHETQDAPWDYYETHPAMARRFASTMAYETEREGRSSNVLVEGYAWTSLLAETTATTTSPLVVDVGGSRGKTALEIAHAHPELTLLVQDLPSMIEGARDQLPAIPARERVQFMAHDFFAPQLVPADAYILRHVFHNWSDRNAVRILRALVPSLQPGARLIVNDYIAPVPGVLSLAKEQRLREMDLIMLTLCNAYEREEQDWKRLFQEADPRFHVRTMSVPKGATEGILEVIWEG.

S-adenosyl-L-methionine contacts are provided by residues 258-259 (GG), Asp-281, 308-309 (DF), and Arg-323. The active-site Proton acceptor is the His-327.

It belongs to the class I-like SAM-binding methyltransferase superfamily. Cation-independent O-methyltransferase family.

It participates in secondary metabolite biosynthesis. Its function is as follows. O-methyltransferase; part of the gene cluster that mediates the biosynthesis of pyranoviolin A, a pyranonigrin analog with a C-3 methoxy group. Initially, the PKS portion of pyvA synthesizes C-10 carbon chain from 5 molecules of malonyl-CoA, which is then condensed with the thiolation (T) domain-bound glycine activated by the adenylation (A) domain. The subsequent chain release by Dieckmann condensation (DKC) could be catalyzed by the TE domain present at the C-terminus of pyvA and/or the alpha/beta hydrolase pyvD, installing the tetramic acid moiety. The FAD-dependent monooxygenase pyvC next epoxidizes one of the olefins of the polyketide part, and the epoxide ring-opening induces the dihydro-gamma-pyrone ring formation. The cytochrome P450 monooxygeanse pyvB would be responsible for the 2 consecutive reactions, in which the dihydro-gamma-pyrone is oxidized to gamma-pyrone and C-7 is hydroxylated to yield pyranonigrin F. Finally, the O-methyltransferase pyvH methylates the C-3 hydroxy group to complete the biosynthesis. This chain is O-methyltransferase pyvH, found in Aspergillus violaceofuscus (strain CBS 115571).